The sequence spans 445 residues: Serine--tRNA ligase (445 aa).

229–231 (TAE) is an L-serine binding site. ATP contacts are provided by residues 260–262 (RKE) and Val276. Glu283 serves as a coordination point for L-serine. Position 347-350 (347-350 (EVSS)) interacts with ATP. Position 383 (Ser383) interacts with L-serine.

This sequence belongs to the class-II aminoacyl-tRNA synthetase family. Type-1 seryl-tRNA synthetase subfamily. In terms of assembly, homodimer. The tRNA molecule binds across the dimer.

Its subcellular location is the cytoplasm. The enzyme catalyses tRNA(Ser) + L-serine + ATP = L-seryl-tRNA(Ser) + AMP + diphosphate + H(+). The catalysed reaction is tRNA(Sec) + L-serine + ATP = L-seryl-tRNA(Sec) + AMP + diphosphate + H(+). The protein operates within aminoacyl-tRNA biosynthesis; selenocysteinyl-tRNA(Sec) biosynthesis; L-seryl-tRNA(Sec) from L-serine and tRNA(Sec): step 1/1. Its function is as follows. Catalyzes the attachment of serine to tRNA(Ser). Is also able to aminoacylate tRNA(Sec) with serine, to form the misacylated tRNA L-seryl-tRNA(Sec), which will be further converted into selenocysteinyl-tRNA(Sec). The chain is Serine--tRNA ligase from Thermomicrobium roseum (strain ATCC 27502 / DSM 5159 / P-2).